We begin with the raw amino-acid sequence, 383 residues long: MSKRDYYEVLGVAKTASESELKVAFRKLAMVHHPDRNPGDKEAEIKFKEVNEAYQCLSDGEKRAAYDRFGHAAFSQGGAGGPGFGNEFGDFMSDIFENFFGDGRGAPGGGRGRGGAPGRERGADLRYNLEISLEEAFSGKTETIRIPTSIACEACSGTGAKAGSKPRTCSTCGGYGRVRAAQGFFAIERTCPNCHGRGEVVDDPCTACSGAGRVNRERTLSINVPAGVDDGLRIRLAGEGESGLRGGPSGDLYVFLSIKPHPFFQRDGADLFCRVPISMVTAALSGEITVPVIDGSQTQVRIPAGTQTAKQFRIKGKGMPVLRSREVGDLYIQVSVETPQNLTKRQRELLQEFDQSASDENHPESAGFFSKVRDFFVSGATRA.

In terms of domain architecture, J spans 5-70 (DYYEVLGVAK…EKRAAYDRFG (66 aa)). A CR-type zinc finger spans residues 139–217 (GKTETIRIPT…CSGAGRVNRE (79 aa)). 8 residues coordinate Zn(2+): Cys152, Cys155, Cys169, Cys172, Cys191, Cys194, Cys205, and Cys208. CXXCXGXG motif repeat units follow at residues 152-159 (CEACSGTG), 169-176 (CSTCGGYG), 191-198 (CPNCHGRG), and 205-212 (CTACSGAG).

The protein belongs to the DnaJ family. In terms of assembly, homodimer. Requires Zn(2+) as cofactor.

It is found in the cytoplasm. Its function is as follows. Participates actively in the response to hyperosmotic and heat shock by preventing the aggregation of stress-denatured proteins and by disaggregating proteins, also in an autonomous, DnaK-independent fashion. Unfolded proteins bind initially to DnaJ; upon interaction with the DnaJ-bound protein, DnaK hydrolyzes its bound ATP, resulting in the formation of a stable complex. GrpE releases ADP from DnaK; ATP binding to DnaK triggers the release of the substrate protein, thus completing the reaction cycle. Several rounds of ATP-dependent interactions between DnaJ, DnaK and GrpE are required for fully efficient folding. Also involved, together with DnaK and GrpE, in the DNA replication of plasmids through activation of initiation proteins. In Methylorubrum populi (strain ATCC BAA-705 / NCIMB 13946 / BJ001) (Methylobacterium populi), this protein is Chaperone protein DnaJ.